A 130-amino-acid polypeptide reads, in one-letter code: MSNKHPLVQVIENAQLIERPSFAPGDTVVVQVKVREGERERLQAFEGVVIAKRNRGLNSAFTVRKISSGVGVERAFQLHSPIIDSIEVKRRGAVRRAKLYYLRERSGKSARIREKLAPRAPKVVKPKADA.

This sequence belongs to the bacterial ribosomal protein bL19 family.

This protein is located at the 30S-50S ribosomal subunit interface and may play a role in the structure and function of the aminoacyl-tRNA binding site. This is Large ribosomal subunit protein bL19 from Psychrobacter arcticus (strain DSM 17307 / VKM B-2377 / 273-4).